We begin with the raw amino-acid sequence, 521 residues long: DEAD-box ATP-dependent RNA helicase 1 (521 aa).

The disordered stretch occupies residues 1 to 20 (MVVAMATKEEEGGPSSRVPH). Positions 36–65 (CPVAHLPRLDPRLVKPLQRMGIESFFPVQV) match the Q motif motif. In terms of domain architecture, Helicase ATP-binding spans 72–302 (IGPGAFERDI…QLELQHPLLL (231 aa)). Position 85–92 (85–92 (SPTGSGKT)) interacts with ATP. The DEAD box motif lies at 213–216 (DETD). Positions 330-480 (SLIVLLQELR…SLPEESVETL (151 aa)) constitute a Helicase C-terminal domain. Basic and acidic residues predominate over residues 495-507 (LESEATKKSKSGD). Positions 495–521 (LESEATKKSKSGDKAPNASKRKRTINT) are disordered.

Belongs to the DEAD box helicase family. DDX51/DBP6 subfamily.

The catalysed reaction is ATP + H2O = ADP + phosphate + H(+). The sequence is that of DEAD-box ATP-dependent RNA helicase 1 from Oryza sativa subsp. japonica (Rice).